A 156-amino-acid chain; its full sequence is Small ribosomal subunit protein uS7 (156 aa).

This sequence belongs to the universal ribosomal protein uS7 family. Part of the 30S ribosomal subunit. Contacts proteins S9 and S11.

Its function is as follows. One of the primary rRNA binding proteins, it binds directly to 16S rRNA where it nucleates assembly of the head domain of the 30S subunit. Is located at the subunit interface close to the decoding center, probably blocks exit of the E-site tRNA. In Oleidesulfovibrio alaskensis (strain ATCC BAA-1058 / DSM 17464 / G20) (Desulfovibrio alaskensis), this protein is Small ribosomal subunit protein uS7.